The chain runs to 499 residues: Protein-cysteine N-palmitoyltransferase HHAT (499 aa).

Residues methionine 1 to tryptophan 5 are Cytoplasmic-facing. Residues glutamate 6–phenylalanine 22 form a helical membrane-spanning segment. Residues tyrosine 23 to glycine 67 lie on the Lumenal side of the membrane. A helical transmembrane segment spans residues lysine 68–leucine 84. The Cytoplasmic portion of the chain corresponds to alanine 85–proline 94. The interval lysine 91–valine 155 is essential for palmitoylation of SHH. The stretch at tryptophan 95–leucine 119 is an intramembrane region. The Cytoplasmic portion of the chain corresponds to histidine 120–arginine 131. A helical membrane pass occupies residues serine 132–arginine 148. Residues leucine 149–threonine 162 are Lumenal-facing. The chain crosses the membrane as a helical span at residues glutamate 163–phenylalanine 183. Residues serine 184–proline 208 lie on the Cytoplasmic side of the membrane. Cysteine 188 carries the S-palmitoyl cysteine lipid modification. Residues tryptophan 209–glycine 223 lie within the membrane without spanning it. Over proline 224–isoleucine 249 the chain is Cytoplasmic. A lipid anchor (S-palmitoyl cysteine) is attached at cysteine 248. The chain crosses the membrane as a helical span at residues valine 250–tyrosine 277. Topologically, residues serine 278–serine 287 are lumenal. The chain crosses the membrane as a helical span at residues cysteine 288–leucine 316. The Cytoplasmic portion of the chain corresponds to methionine 317–glycine 369. Cysteine 330 is lipidated: S-palmitoyl cysteine. A helical transmembrane segment spans residues threonine 370–glycine 386. Histidine 385 is an active-site residue. Residues serine 387–glutamate 389 are Lumenal-facing. The chain crosses the membrane as a helical span at residues aspartate 390–glutamate 405. Residues serine 406–leucine 433 are Cytoplasmic-facing. Cysteine 416 carries S-palmitoyl cysteine lipidation. Residues histidine 434–glycine 454 form a helical membrane-spanning segment. GTP is bound at residue glycine 454–threonine 461. Residues glycine 455–leucine 468 lie on the Lumenal side of the membrane. Residues glutamine 469–histidine 487 form a helical membrane-spanning segment. The Cytoplasmic segment spans residues valine 488–leucine 499.

Belongs to the membrane-bound acyltransferase family. HHAT subfamily.

It localises to the endoplasmic reticulum membrane. It is found in the golgi apparatus membrane. It catalyses the reaction N-terminal L-cysteinyl-[protein] + hexadecanoyl-CoA = N-terminal N-hexadecanoyl-L-cysteinyl-[protein] + CoA + H(+). The enzyme catalyses N-terminal L-cysteinyl-[protein]-C-terminal glycyl cholesterol ester + hexadecanoyl-CoA = N-terminal N-hexadecanoyl-L-cysteinyl-[protein]-C-terminal glycyl cholesterol ester + CoA + H(+). Its function is as follows. Palmitoyl acyltransferase that catalyzes N-terminal palmitoylation of SHH; which is required for SHH signaling during limb development. It also catalyzes N-terminal palmitoylation of DHH. Promotes the transfer of palmitoyl-CoA from the cytoplasmic to the luminal side of the endoplasmic reticulum membrane, where SHH palmitoylation occurs. Plays a role in proper testis cord formation and the differentiation of Leydig cells. This is Protein-cysteine N-palmitoyltransferase HHAT (Hhat) from Mus musculus (Mouse).